A 360-amino-acid chain; its full sequence is MKPSIVAKLEALHERHEEVQALLGDAQTIADQERFRALSREYAQLSDVSRCFTDWQQVQEDIETAQMMLDDPEMREMAQDELREAKEKSEQLEQQLQVLLLPKDPDDERNAFLEVRAGTGGDEAALFAGDLFRMYSRYAEARRWRVEIMSASEGEHGGYKEIIAKISGDGVYGRLKFESGGHRVQRVPATESQGRIHTSACTVAVMPELPDAELPDINPADLRIDTFRSSGAGGQHVNTTDSAIRITHLPTGIVVECQDERSQHKNKAKALSVLGARIHAAEMAKRQQAEASTRRNLLGSGDRSDRNRTYNFPQGRVTDHRINLTLYCLDEVMEGKLDMLIEPIIQEHQADQLAALSEQE.

The residue at position 235 (glutamine 235) is an N5-methylglutamine. Residues 284–312 form a disordered region; the sequence is AKRQQAEASTRRNLLGSGDRSDRNRTYNF.

Belongs to the prokaryotic/mitochondrial release factor family. Methylated by PrmC. Methylation increases the termination efficiency of RF1.

The protein localises to the cytoplasm. Peptide chain release factor 1 directs the termination of translation in response to the peptide chain termination codons UAG and UAA. The chain is Peptide chain release factor 1 from Escherichia coli O81 (strain ED1a).